The primary structure comprises 390 residues: Succinate--CoA ligase [ADP-forming] subunit beta (390 aa).

The region spanning 9–245 (KHLLKKYNIP…TTQEDEHETM (237 aa)) is the ATP-grasp domain. Residues K46, 53–55 (GRG), E99, S102, and E107 each bind ATP. The Mg(2+) site is built by N200 and D214. Substrate contacts are provided by residues N265 and 322-324 (GIV).

The protein belongs to the succinate/malate CoA ligase beta subunit family. In terms of assembly, heterotetramer of two alpha and two beta subunits. The cofactor is Mg(2+).

It catalyses the reaction succinate + ATP + CoA = succinyl-CoA + ADP + phosphate. The catalysed reaction is GTP + succinate + CoA = succinyl-CoA + GDP + phosphate. The protein operates within carbohydrate metabolism; tricarboxylic acid cycle; succinate from succinyl-CoA (ligase route): step 1/1. Succinyl-CoA synthetase functions in the citric acid cycle (TCA), coupling the hydrolysis of succinyl-CoA to the synthesis of either ATP or GTP and thus represents the only step of substrate-level phosphorylation in the TCA. The beta subunit provides nucleotide specificity of the enzyme and binds the substrate succinate, while the binding sites for coenzyme A and phosphate are found in the alpha subunit. In Coxiella burnetii (strain RSA 331 / Henzerling II), this protein is Succinate--CoA ligase [ADP-forming] subunit beta.